The following is a 359-amino-acid chain: tRNA-specific 2-thiouridylase MnmA (359 aa).

ATP contacts are provided by residues 9 to 16 (GISGGVDS) and methionine 35. An interaction with target base in tRNA region spans residues 95 to 97 (NPD). Cysteine 100 (nucleophile) is an active-site residue. Cysteine 100 and cysteine 197 are joined by a disulfide. Glycine 124 lines the ATP pocket. Residues 147-149 (KDQ) form an interaction with tRNA region. Cysteine 197 (cysteine persulfide intermediate) is an active-site residue. The tract at residues 309–310 (RY) is interaction with tRNA.

It belongs to the MnmA/TRMU family.

It is found in the cytoplasm. It carries out the reaction S-sulfanyl-L-cysteinyl-[protein] + uridine(34) in tRNA + AH2 + ATP = 2-thiouridine(34) in tRNA + L-cysteinyl-[protein] + A + AMP + diphosphate + H(+). Its function is as follows. Catalyzes the 2-thiolation of uridine at the wobble position (U34) of tRNA, leading to the formation of s(2)U34. The chain is tRNA-specific 2-thiouridylase MnmA from Francisella tularensis subsp. holarctica (strain FTNF002-00 / FTA).